The sequence spans 382 residues: O-methyltransferase okaF (382 aa).

Positions 249 and 287 each coordinate S-adenosyl-L-methionine. H291 acts as the Proton acceptor in catalysis.

This sequence belongs to the class I-like SAM-binding methyltransferase superfamily. Cation-independent O-methyltransferase family.

The enzyme catalyses 3-desmethyl okaramine B + S-adenosyl-L-methionine = okaramine B + S-adenosyl-L-homocysteine + H(+). It functions in the pathway alkaloid biosynthesis. O-methyltransferase; part of the gene cluster that mediates the biosynthesis of okaramine B, a prenylated indole alkaloid that possesses an unusual octacyclic ring system, including a four-membered azetidine ring and an eight-membered azocine ring, and that exhibits insecticidal activity against silkworm larvae. Within the pathway, okaF catalyzes the last step which is the methylation of 3-desmethyl okaramine B to produce okaramine B. With okaG, OkaF is also able to produce okaramine D from okaramine E. The biosynthesis begins with the NRPS okaA that condenses two tryptophan molecules into cyclo(L-Trp-L-Trp). Prenylation by the prenyltransferase okaC then leads to the formation of cyclo(N8-(alpha,alpha-dimethylallyl)-L-Trp-6a-(alpha,alpha-dime-thylallyl)-L-Trp). This is followed by indole 2,3-epoxidation by the FAD-dependent monooxygenase okaB to facilitate the formation of the hexahydropyrrolo[2,3-b]indole (HPI) moiety of okaramine C. The cytochrome P450 monooxygenase okaD then likely catalyzes formation of the eight-membered ring of okaramine A. The dioxygenase okaE further forms the unusual 2-dimethyl-3-methyl-azetidine ring to yield 12-deshydroxyl okaramine E, as well as the hydroxylation of 12-deshydroxyl okaramine E to produce okaramine E. The cytochrome P450 monoxygenase okaG converts 12-deshydroxyl okaramine E into 3-desmethyl okaramine B which is further methylated by the methyltransferase okaF into okaramine B. In a shunt pathway, okaG and okaF together are also able to convert okaramine E into okaramine D. Okaramine H is produced by nonenzymatic conversion from okaramine A. In Penicillium ochrochloron, this protein is O-methyltransferase okaF.